The primary structure comprises 307 residues: Probable rRNA-processing protein EBP2 homolog (307 aa).

3 disordered regions span residues methionine 1–glutamate 22, glutamine 189–lysine 208, and glutamate 236–lysine 307. A coiled-coil region spans residues glutamate 205–lysine 252. A compositionally biased stretch (basic and acidic residues) spans glutamate 236 to asparagine 245. Composition is skewed to basic residues over residues arginine 246–threonine 266 and arginine 294–lysine 307.

Belongs to the EBP2 family.

Its subcellular location is the nucleus. It is found in the nucleolus. In terms of biological role, required for the processing of the 27S pre-rRNA. The chain is Probable rRNA-processing protein EBP2 homolog from Drosophila melanogaster (Fruit fly).